The primary structure comprises 215 residues: Uracil phosphoribosyltransferase (215 aa).

Residues R84, R109, and 136 to 144 each bind 5-phospho-alpha-D-ribose 1-diphosphate; that span reads DPMLATGNT. Residues I198 and 203 to 205 contribute to the uracil site; that span reads GDA. D204 provides a ligand contact to 5-phospho-alpha-D-ribose 1-diphosphate.

The protein belongs to the UPRTase family. Mg(2+) is required as a cofactor.

It catalyses the reaction UMP + diphosphate = 5-phospho-alpha-D-ribose 1-diphosphate + uracil. The protein operates within pyrimidine metabolism; UMP biosynthesis via salvage pathway; UMP from uracil: step 1/1. Its activity is regulated as follows. Allosterically activated by GTP. Its function is as follows. Catalyzes the conversion of uracil and 5-phospho-alpha-D-ribose 1-diphosphate (PRPP) to UMP and diphosphate. This chain is Uracil phosphoribosyltransferase, found in Methanothermobacter thermautotrophicus (strain ATCC 29096 / DSM 1053 / JCM 10044 / NBRC 100330 / Delta H) (Methanobacterium thermoautotrophicum).